A 357-amino-acid chain; its full sequence is MPPRLCVRCNTSRAMLNRPKTQEQVCRECFFTAFEEEVHQTIVDNKLFKHGERLAVAASGGKDSTVLAHIMSTLNARYNYGLDLFLLSIDEGITGYRDDSLETVKRNEQQYGIPLKVVSYKELYGWTMDEIVSQIGTKNNCTFCGVFRRQALDRGAVLMGANKIATGHNADDVAETVLLNILRGDVPRLGRCANIITGEDSSLPRVKPFKYAYEKEIVLYAYYKKLDYFSTECIYAPFAARGFAREFIKDLEAARPLAIIDVIRSAEDFVFAAASDEKLPQPRTCERCGYISSQPVCKACVLLEGLNRGMPRLGVSRTRGRRGEKAGLHPDVGRGGGGGSSGPAEVASPVEIVYETT.

Residues 314–348 (GVSRTRGRRGEKAGLHPDVGRGGGGGSSGPAEVAS) are disordered. The segment covering 321–332 (RRGEKAGLHPDV) has biased composition (basic and acidic residues).

The protein belongs to the TtcA family. CTU1/NCS6/ATPBD3 subfamily.

It localises to the cytoplasm. It participates in tRNA modification; 5-methoxycarbonylmethyl-2-thiouridine-tRNA biosynthesis. Functionally, plays a central role in 2-thiolation of mcm(5)S(2)U at tRNA wobble positions of tRNA(Lys), tRNA(Glu) and tRNA(Gln). Directly binds tRNAs and probably acts by catalyzing adenylation of tRNAs, an intermediate required for 2-thiolation. It is unclear whether it acts as a sulfurtransferase that transfers sulfur from thiocarboxylated URM1 onto the uridine of tRNAs at wobble position. In Chlamydomonas reinhardtii (Chlamydomonas smithii), this protein is Cytoplasmic tRNA 2-thiolation protein 1.